Here is a 530-residue protein sequence, read N- to C-terminus: Trigger factor (530 aa).

The PPIase FKBP-type domain maps to 162 to 243 (DDLVTIDLAG…VTKVCEQELP (82 aa)). The disordered stretch occupies residues 432–530 (NALELDRIQP…KTAAKDDKSK (99 aa)). Composition is skewed to basic and acidic residues over residues 459 to 478 (SAEK…EKAP) and 501 to 512 (KVVDAKSDDKPA).

The protein belongs to the FKBP-type PPIase family. Tig subfamily.

The protein resides in the cytoplasm. The catalysed reaction is [protein]-peptidylproline (omega=180) = [protein]-peptidylproline (omega=0). Its function is as follows. Involved in protein export. Acts as a chaperone by maintaining the newly synthesized protein in an open conformation. Functions as a peptidyl-prolyl cis-trans isomerase. The polypeptide is Trigger factor (Cutibacterium acnes (strain DSM 16379 / KPA171202) (Propionibacterium acnes)).